The primary structure comprises 529 residues: Amino acid transporter heavy chain SLC3A2 (529 aa).

A disordered region spans residues 1-20; sequence MSQDTEVDMKEVELNELEPE. At 1–84 the chain is on the cytoplasmic side; it reads MSQDTEVDMK…SPGWVRTRWA (84 aa). The residue at position 2 (Ser2) is a Phosphoserine. Thr5 is modified (phosphothreonine). Positions 7 to 20 are enriched in basic and acidic residues; the sequence is VDMKEVELNELEPE. A Glycyl lysine isopeptide (Lys-Gly) (interchain with G-Cter in ubiquitin) cross-link involves residue Lys49. Residue Ser65 is modified to Phosphoserine. A Glycyl lysine isopeptide (Lys-Gly) (interchain with G-Cter in SUMO2) cross-link involves residue Lys66. A helical; Signal-anchor for type II membrane protein membrane pass occupies residues 85–105; it reads LLLLFWLGWIGMLAGAVVIIV. Over 106–529 the chain is Extracellular; the sequence is RAPRCRELPV…GLLLHFPYVA (424 aa). The N-linked (GlcNAc...) asparagine glycan is linked to Asn266. Phosphoserine is present on residues Ser307 and Ser309. N-linked (GlcNAc...) asparagine glycosylation is found at Asn325 and Asn405. The residue at position 426 (Ser426) is a Phosphoserine.

The protein belongs to the SLC3A transporter family. In terms of assembly, disulfide-linked heterodimer with a non-glycosylated light chain (SLC7A5, SLC7A6, SLC7A7, SLC7A8, SLC7A10 or SLC7A11). Interacts with TLCD3A/CT120 and ICAM1. Constitutively and specifically associates with beta-1 integrins (alpha-2/beta-1, alpha-3/beta-1, alpha-5/beta-1 and alpha-6/beta-1), but minimally with alpha-4/beta-1. Interacts with LAPTM4B; recruits SLC3A2 and SLC7A5 to lysosomes to promote leucine uptake into these organelles and is required for mTORC1 activation. Post-translationally, phosphorylation on Ser-307 or Ser-309 and on Ser-426 by ecto-protein kinases favors heterotypic cell-cell interactions. N-glycosylated; N-glycosylation is crucial for trafficking and stability of SLC3A2 to the plasma membrane.

The protein resides in the apical cell membrane. It is found in the cell membrane. The protein localises to the cell junction. Its subcellular location is the lysosome membrane. It localises to the melanosome. The protein resides in the basolateral cell membrane. In terms of biological role, acts as a chaperone that facilitates biogenesis and trafficking of functional transporters heterodimers to the plasma membrane. Forms heterodimer with SLC7 family transporters (SLC7A5, SLC7A6, SLC7A7, SLC7A8, SLC7A10 and SLC7A11), a group of amino-acid antiporters. Heterodimers function as amino acids exchangers, the specificity of the substrate depending on the SLC7A subunit. Heterodimers formed by SLC3A2/SLC7A6 or SLC3A2/SLC7A7 mediate the uptake of dibasic amino acids. Heterodimer SLC3A2/SLC7A11 functions as an antiporter by mediating the exchange of extracellular anionic L-cystine and intracellular L-glutamate across the cellular plasma membrane. SLC3A2/SLC7A10 translocates small neutral L- and D-amino acids across the plasma membrane. SLC3A2/SLC75 or SLC3A2/SLC7A8 translocates neutral amino acids with broad specificity, thyroid hormones and L-DOPA. SLC3A2 is essential for plasma membrane localization, stability, and the transport activity of SLC7A5 and SLC7A8. When associated with LAPTM4B, the heterodimer SLC7A5 is recruited to lysosomes to promote leucine uptake into these organelles, and thereby mediates mTORC1 activation. Modulates integrin-related signaling and is essential for integrin-dependent cell spreading, migration and tumor progression. This is Amino acid transporter heavy chain SLC3A2 from Oryctolagus cuniculus (Rabbit).